The following is a 316-amino-acid chain: SWR complex protein 2 (316 aa).

Disordered stretches follow at residues methionine 1 to valine 81, lysine 93 to tyrosine 127, and glutamate 153 to glutamine 180. Residues lysine 20–arginine 31 show a composition bias toward basic and acidic residues. Residues lysine 20–lysine 95 are a coiled coil. The segment covering glutamate 40 to arginine 56 has biased composition (acidic residues). Phosphoserine occurs at positions 64 and 65. The span at glutamate 70 to valine 81 shows a compositional bias: basic and acidic residues. Over residues valine 167–glutamine 180 the composition is skewed to polar residues.

The protein belongs to the VPS72/YL1 family. In terms of assembly, component of the SWR1 chromatin-remodeling complex.

The protein resides in the nucleus. Its function is as follows. Participates in the catalytic exchange of histone H2A for the H2A variant pht1, an euchromatin-specific factor, leading to chromatin remodeling and changes in transcription of targeted genes. The polypeptide is SWR complex protein 2 (swc2) (Schizosaccharomyces pombe (strain 972 / ATCC 24843) (Fission yeast)).